Consider the following 80-residue polypeptide: Protein FAM229B (80 aa).

The segment at 1-45 is disordered; that stretch reads MPFRFGTQPRRFPVEGGDSSIELESGLSSSASCTGKETSPNRQLR. Low complexity predominate over residues 15–32; it reads EGGDSSIELESGLSSSAS. Residues 33 to 42 are compositionally biased toward polar residues; that stretch reads CTGKETSPNR.

The protein belongs to the FAM229 family.

This Mus musculus (Mouse) protein is Protein FAM229B (Fam229b).